Consider the following 299-residue polypeptide: Tyrosine recombinase XerC (299 aa).

The Core-binding (CB) domain maps to 1–86; that stretch reads MRNELLDFLE…AIRSLFKFLT (86 aa). Residues 107 to 293 enclose the Tyr recombinase domain; sequence KLPEFLSIEE…NQARMTEVYN (187 aa). Active-site residues include Arg-146, Lys-170, His-245, Arg-248, and His-271. Residue Tyr-280 is the O-(3'-phospho-DNA)-tyrosine intermediate of the active site.

Belongs to the 'phage' integrase family. XerC subfamily. As to quaternary structure, forms a cyclic heterotetrameric complex composed of two molecules of XerC and two molecules of XerD.

Its subcellular location is the cytoplasm. Functionally, site-specific tyrosine recombinase, which acts by catalyzing the cutting and rejoining of the recombining DNA molecules. The XerC-XerD complex is essential to convert dimers of the bacterial chromosome into monomers to permit their segregation at cell division. It also contributes to the segregational stability of plasmids. The chain is Tyrosine recombinase XerC from Natranaerobius thermophilus (strain ATCC BAA-1301 / DSM 18059 / JW/NM-WN-LF).